Here is a 165-residue protein sequence, read N- to C-terminus: Shikimate kinase (165 aa).

11-16 (GAGKTT) contributes to the ATP binding site. Residue Thr-15 coordinates Mg(2+). 3 residues coordinate substrate: Asp-33, Arg-57, and Gly-78. Arg-116 provides a ligand contact to ATP. Arg-134 contributes to the substrate binding site.

The protein belongs to the shikimate kinase family. In terms of assembly, monomer. Mg(2+) is required as a cofactor.

It localises to the cytoplasm. It catalyses the reaction shikimate + ATP = 3-phosphoshikimate + ADP + H(+). It functions in the pathway metabolic intermediate biosynthesis; chorismate biosynthesis; chorismate from D-erythrose 4-phosphate and phosphoenolpyruvate: step 5/7. In terms of biological role, catalyzes the specific phosphorylation of the 3-hydroxyl group of shikimic acid using ATP as a cosubstrate. The polypeptide is Shikimate kinase (Bacillus cytotoxicus (strain DSM 22905 / CIP 110041 / 391-98 / NVH 391-98)).